The primary structure comprises 98 residues: NADH-ubiquinone oxidoreductase chain 4L (98 aa).

The next 3 helical transmembrane spans lie at 1–21, 29–49, and 61–81; these read MSLTYMNMFMAFMISLLGLLM, SLLCLEGMMLSLFVMMTVIIL, and IILLVFAACEAALGLSLLVMV.

The protein belongs to the complex I subunit 4L family. In terms of assembly, core subunit of respiratory chain NADH dehydrogenase (Complex I) which is composed of 45 different subunits.

The protein resides in the mitochondrion inner membrane. The catalysed reaction is a ubiquinone + NADH + 5 H(+)(in) = a ubiquinol + NAD(+) + 4 H(+)(out). Its function is as follows. Core subunit of the mitochondrial membrane respiratory chain NADH dehydrogenase (Complex I) which catalyzes electron transfer from NADH through the respiratory chain, using ubiquinone as an electron acceptor. Part of the enzyme membrane arm which is embedded in the lipid bilayer and involved in proton translocation. This chain is NADH-ubiquinone oxidoreductase chain 4L (MT-ND4L), found in Uroderma bilobatum (Tent-making bat).